Reading from the N-terminus, the 115-residue chain is Methylmalonyl-CoA decarboxylase subunit delta (115 aa).

A helical transmembrane segment spans residues 11–31 (WLIMAINMTVVFAVLIALGIL). The segment at 46–70 (EAPAATAPVATPTATPVAPANASAQ) is disordered. A compositionally biased stretch (low complexity) spans 48–65 (PAATAPVATPTATPVAPA).

Belongs to the OadG family. In terms of assembly, the methylmalonyl-CoA decarboxylase is composed of five subunits: the carboxyltransferase alpha subunit (MmdA), the tunnel beta subunit (MmdB), the biotin-containing gamma subunit (MmdC), and the delta (MmdD) and epsilon (MmdE) subunits. Post-translationally, the N-terminus is blocked.

It is found in the cell membrane. The catalysed reaction is (S)-methylmalonyl-CoA + Na(+)(in) + H(+)(out) = propanoyl-CoA + Na(+)(out) + CO2. Its activity is regulated as follows. Completely inhibited by avidin. Subunit of the sodium ion pump methylmalonyl-CoA decarboxylase, which converts the chemical energy of a decarboxylation reaction into an electrochemical gradient of Na(+) ions across the cytoplasmic membrane, thereby creating a sodium ion motive force that is used for ATP synthesis. The delta subunit is required for catalytic activity as well as for the proper assembly of the individual subunits to an enzyme complex. Can also convert malonyl-CoA into acetyl-CoA. In Veillonella parvula (Staphylococcus parvulus), this protein is Methylmalonyl-CoA decarboxylase subunit delta.